Here is a 79-residue protein sequence, read N- to C-terminus: Conotoxin VnMKLT1-01122 (79 aa).

A signal peptide spans 1-22 (MKLTCMKIVAVLFLTAWTFVTA). Residues 23 to 48 (DDSRNGLEYLFPKAHYEMNPEASKLN) constitute a propeptide that is removed on maturation. A Pyrrolidone carboxylic acid modification is found at Gln-51. Intrachain disulfides connect Cys-53–Cys-70, Cys-60–Cys-74, and Cys-69–Cys-78.

It belongs to the conotoxin O1 superfamily. In terms of tissue distribution, expressed by the venom duct.

The protein localises to the secreted. In Conus ventricosus (Mediterranean cone), this protein is Conotoxin VnMKLT1-01122.